The chain runs to 159 residues: SsrA-binding protein (159 aa).

Basic and acidic residues predominate over residues 133–147; that stretch reads KRQDLAKRDAQREMA. The interval 133–159 is disordered; the sequence is KRQDLAKRDAQREMARAAGRRSKGMDD. Residues 150–159 show a composition bias toward basic residues; it reads AGRRSKGMDD.

The protein belongs to the SmpB family.

Its subcellular location is the cytoplasm. In terms of biological role, required for rescue of stalled ribosomes mediated by trans-translation. Binds to transfer-messenger RNA (tmRNA), required for stable association of tmRNA with ribosomes. tmRNA and SmpB together mimic tRNA shape, replacing the anticodon stem-loop with SmpB. tmRNA is encoded by the ssrA gene; the 2 termini fold to resemble tRNA(Ala) and it encodes a 'tag peptide', a short internal open reading frame. During trans-translation Ala-aminoacylated tmRNA acts like a tRNA, entering the A-site of stalled ribosomes, displacing the stalled mRNA. The ribosome then switches to translate the ORF on the tmRNA; the nascent peptide is terminated with the 'tag peptide' encoded by the tmRNA and targeted for degradation. The ribosome is freed to recommence translation, which seems to be the essential function of trans-translation. In Salinispora arenicola (strain CNS-205), this protein is SsrA-binding protein.